Consider the following 486-residue polypeptide: Mogroside I-E synthase (486 aa).

Positions 302, 360, 362, 380, 381, 382, 385, 401, and 402 each coordinate UDP-alpha-D-glucose.

This sequence belongs to the UDP-glycosyltransferase family. Highly expressed in young fruits 15 days after anthesis (15-DAA).

The catalysed reaction is mogrol + UDP-alpha-D-glucose = mogroside IE + UDP + H(+). The enzyme catalyses mogroside I-A1 + UDP-alpha-D-glucose = mogroside IIE + UDP + H(+). It carries out the reaction mogroside II-A1 + UDP-alpha-D-glucose = mogroside IIIX + UDP + H(+). It catalyses the reaction mogroside II-A + UDP-alpha-D-glucose = mogroside III + UDP + H(+). It participates in secondary metabolite biosynthesis; terpenoid biosynthesis. In terms of biological role, UDP-glycosyltransferase involved in the biosynthesis of cucurbitacin and mogroside tetracyclic triterpene natural products (e.g. siamenoside I and mogrosides IV, V and VI). Cucurbitacins have cytotoxic properties and exhibit deterrent taste as a defense barrier against herbivores. Mogrosides are nonsugar highly oxygenated compounds used as high-intensity zero-calorie sweeteners; they also possess pharmacological properties such as regulating immunity, lowering blood sugar and lipid levels, protecting the liver, and acting as antioxidants and antitumor agents. Catalyzes the C3 primary glucosylation of mogrol, mogroside I-A1, mogroside II-A1 and mogroside II-A. This Siraitia grosvenorii (Monk's fruit) protein is Mogroside I-E synthase.